A 258-amino-acid polypeptide reads, in one-letter code: Ureidoacrylate amidohydrolase RutB (258 aa).

Positions 1-23 are disordered; that stretch reads MDRPTTYPMDQPAGFRDAQGRHG. The active-site Proton acceptor is the aspartate 47. The active site involves lysine 156. Cysteine 189 (nucleophile) is an active-site residue.

It belongs to the isochorismatase family. RutB subfamily.

It carries out the reaction (Z)-3-ureidoacrylate + H2O + H(+) = (Z)-3-aminoacrylate + NH4(+) + CO2. It catalyses the reaction (Z)-3-ureidoacrylate + H2O = (Z)-3-aminoacrylate + carbamate + H(+). The catalysed reaction is (Z)-2-methylureidoacrylate + H2O + H(+) = (Z)-2-methylaminoacrylate + NH4(+) + CO2. In terms of biological role, hydrolyzes ureidoacrylate to form aminoacrylate and carbamate. The carbamate hydrolyzes spontaneously, thereby releasing one of the nitrogen atoms of the pyrimidine ring as ammonia and one of its carbon atoms as CO2. In Methylobacterium radiotolerans (strain ATCC 27329 / DSM 1819 / JCM 2831 / NBRC 15690 / NCIMB 10815 / 0-1), this protein is Ureidoacrylate amidohydrolase RutB.